A 64-amino-acid polypeptide reads, in one-letter code: DNA gyrase inhibitor YacG (64 aa).

The Zn(2+) site is built by cysteine 10, cysteine 13, cysteine 29, and cysteine 33.

The protein belongs to the DNA gyrase inhibitor YacG family. As to quaternary structure, interacts with GyrB. The cofactor is Zn(2+).

Functionally, inhibits all the catalytic activities of DNA gyrase by preventing its interaction with DNA. Acts by binding directly to the C-terminal domain of GyrB, which probably disrupts DNA binding by the gyrase. This Pectobacterium carotovorum subsp. carotovorum (strain PC1) protein is DNA gyrase inhibitor YacG.